The following is a 202-amino-acid chain: MLDLLKISVTGDPSSGKTEACQVFEDLGAYVISADKVSHSFLVPYTSVGQRIIDLLGPEIIIENTLSRKAIAEKVFGNRDLLLSLEEILHPEVCRFVEEKYAHVVQEQKYPLFIAEFPLLYEIQYADWFDQVILISADTGIRKERFLKKTGGSDTSFDLRCARFSSLEEKILRADVVIENNGTKEEFRCKVKQCFKALKGTI.

Residues 6-202 (KISVTGDPSS…QCFKALKGTI (197 aa)) form the DPCK domain. 14–19 (SSGKTE) serves as a coordination point for ATP.

It belongs to the CoaE family.

It is found in the cytoplasm. The enzyme catalyses 3'-dephospho-CoA + ATP = ADP + CoA + H(+). It participates in cofactor biosynthesis; coenzyme A biosynthesis; CoA from (R)-pantothenate: step 5/5. Its function is as follows. Catalyzes the phosphorylation of the 3'-hydroxyl group of dephosphocoenzyme A to form coenzyme A. This chain is Dephospho-CoA kinase, found in Chlamydia trachomatis serovar A (strain ATCC VR-571B / DSM 19440 / HAR-13).